Consider the following 345-residue polypeptide: Methionine import ATP-binding protein MetN 4 (345 aa).

The 240-residue stretch at 2 to 241 (IELTNITKTF…PQLRTTKRFV (240 aa)) folds into the ABC transporter domain. 38 to 45 (GYSGAGKS) contacts ATP.

This sequence belongs to the ABC transporter superfamily. Methionine importer (TC 3.A.1.24) family. The complex is composed of two ATP-binding proteins (MetN), two transmembrane proteins (MetI) and a solute-binding protein (MetQ).

The protein resides in the cell membrane. It catalyses the reaction L-methionine(out) + ATP + H2O = L-methionine(in) + ADP + phosphate + H(+). The catalysed reaction is D-methionine(out) + ATP + H2O = D-methionine(in) + ADP + phosphate + H(+). Its function is as follows. Part of the ABC transporter complex MetNIQ involved in methionine import. Responsible for energy coupling to the transport system. This is Methionine import ATP-binding protein MetN 4 from Oceanobacillus iheyensis (strain DSM 14371 / CIP 107618 / JCM 11309 / KCTC 3954 / HTE831).